The sequence spans 386 residues: Phosphoglycerate kinase (386 aa).

Residues 21–23 (DLN), Arg-36, 59–62 (HLGR), Arg-112, and Arg-145 each bind substrate. ATP contacts are provided by residues Lys-196, Glu-313, and 339 to 342 (GGDT).

This sequence belongs to the phosphoglycerate kinase family. As to quaternary structure, monomer.

Its subcellular location is the cytoplasm. The enzyme catalyses (2R)-3-phosphoglycerate + ATP = (2R)-3-phospho-glyceroyl phosphate + ADP. It functions in the pathway carbohydrate degradation; glycolysis; pyruvate from D-glyceraldehyde 3-phosphate: step 2/5. The sequence is that of Phosphoglycerate kinase from Haemophilus influenzae (strain 86-028NP).